The sequence spans 818 residues: Sodium/hydrogen exchanger 1 (818 aa).

Residues 1 to 98 (MLLWPGASGL…FPVLGIDYQH (98 aa)) are Extracellular-facing. The tract at residues 44-76 (STIRGSEPPRERSIGDVTTAPPELAPESRPVNH) is disordered. The N-linked (GlcNAc...) asparagine glycan is linked to Asn75. A helical transmembrane segment spans residues 99–121 (VRIPFEIALWILLACLMKIGFHV). The Cytoplasmic segment spans residues 122-130 (IPTISSIVP). A helical membrane pass occupies residues 131–148 (ESCLLIVVGLLVGGLIKG). At 149–158 (VGETPPILQS) the chain is on the extracellular side. A helical membrane pass occupies residues 159–176 (EVFFLFLLPPIILDAGYF). The Cytoplasmic segment spans residues 177–186 (LPLRQFTENL). Residues 187 to 215 (GTILIFAVVGTLWNAFFLGGLMYAVCLVG) traverse the membrane as a helical segment. Over 216–222 (GEQINNI) the chain is Extracellular. The helical transmembrane segment at 223-249 (GLLENLLFGSIISAVDPVAVLAVFEEI) threads the bilayer. At 250 to 252 (HIN) the chain is on the cytoplasmic side. Residues 253-283 (ELLHILVFGESLLNDAVTVVLYHLFEEFANY) form a helical membrane-spanning segment. The Extracellular portion of the chain corresponds to 284–287 (DRVG). Residues 288-322 (IVDIILGFLSFFVVSLGGVFVGVVYGVIAAFTSRF) traverse the membrane as a helical segment. The Cytoplasmic segment spans residues 323–328 (TSHIRV). A helical membrane pass occupies residues 329–341 (IEPLFVFLYSYMA). Residues 342-350 (YLSAELFHL) are Extracellular-facing. A helical membrane pass occupies residues 351-371 (SGIMALIASGVVMRPYVEANI). Over 372–373 (SH) the chain is Cytoplasmic. A helical membrane pass occupies residues 374 to 404 (KSHTTIKYFLKMWSSVSETLIFIFLGVSTVA). At 405-410 (GSHHWN) the chain is on the extracellular side. Residues 411 to 438 (WTFVISTLLFCLIARVLGVLGLTWFINK) traverse the membrane as a helical segment. At 439–444 (FRIVKL) the chain is on the cytoplasmic side. The helical transmembrane segment at 445–469 (TPKDQFIIAYGGLRGAIAFSLGYLL) threads the bilayer. The Extracellular segment spans residues 470–475 (DKKHFP). A helical transmembrane segment spans residues 476-505 (MCDLFLTAIITVIFFTVFVQGMTIRPLVDL). The interaction with TESC stretch occupies residues 503 to 545 (VDLLAVKKKQETKRSINEEIHTQFLDHLLTGIEDICGHYGHHH). The Cytoplasmic portion of the chain corresponds to 506 to 818 (LAVKKKQETK…EGEPFIPKGQ (313 aa)). The interval 509–516 (KKKQETKR) is PI(4,5)P2-binding region. The interaction with CHP2 stretch occupies residues 515 to 545 (KRSINEEIHTQFLDHLLTGIEDICGHYGHHH). The interval 540 to 545 (HYGHHH) is confers pH-dependent PI(4,5)P2 binding. A PI(4,5)P2-binding region region spans residues 552-560 (RFNKKYVKK). Phosphoserine occurs at positions 599 and 602. Thr603 is modified (phosphothreonine). Residues Ser605 and Ser648 each carry the phosphoserine modification. The tract at residues 633-818 (KILRNNLQKT…EGEPFIPKGQ (186 aa)) is interaction with TESC. An interaction with CALM1 region spans residues 633–818 (KILRNNLQKT…EGEPFIPKGQ (186 aa)). The segment at 684–687 (LTVP) is interaction with PPP3CA. A phosphoserine mark is found at Ser693, Ser697, and Ser703. The interval 715–720 (PVITID) is interaction with PPP3CA. A phosphoserine mark is found at Ser723, Ser726, and Ser729. Residues 741–818 (VLGLSRDPGR…EGEPFIPKGQ (78 aa)) form a disordered region. Residue Thr782 is modified to Phosphothreonine. Positions 785-794 (PSDSPSSQRI) are enriched in polar residues. 3 positions are modified to phosphoserine: Ser788, Ser790, and Ser799.

The protein belongs to the monovalent cation:proton antiporter 1 (CPA1) transporter (TC 2.A.36) family. As to quaternary structure, homodimer; dimerization is crucial for its function. Oligomer. Interacts with CALM in a calcium-dependent manner. Interacts with TESC. Interacts (via the juxtamembrane region of the cytoplasmic C-terminal domain) with CHP1; the interaction occurs at the plasma membrane in a calcium-dependent manner. Interacts with CHP2; the interaction occurs in a calcium-dependent manner. Interacts with EZR; regulates the cytoskeletal interactions of SLC9A1 and promotes stress fiber formation. Post-translationally, ubiquitinated, leading to its degradation by the proteasome. Ubiquitination is reduced by CHP1. O-glycosylated. In terms of processing, palmitoylated; may play a major role in SLC9A1 regulation. Post-translationally, phosphorylation at Thr-782 increases SLC9A1 activity. Specifically dephosphorylated at Thr-782 by PPP3CA that negatively regulates SLC9A1 activity. Phosphorylation at Ser-648 by AKT1 reduces SLC9A1 binding to CALM1.

The protein resides in the cell membrane. It localises to the basolateral cell membrane. It catalyses the reaction Na(+)(in) + H(+)(out) = Na(+)(out) + H(+)(in). The catalysed reaction is Li(+)(out) + H(+)(in) = Li(+)(in) + H(+)(out). The enzyme catalyses Li(+)(in) + Na(+)(out) = Li(+)(out) + Na(+)(in). Its activity is regulated as follows. Activated at acidic pHs. Inhibited by amiloride and 5-amino-substituted derivatives. Inhibited by cariporide and eniporide. Phosphatidylinositol 4,5-bisphosphate (PI(4,5)P2) and phosphatidylinositol 3,4,5-trisphosphate (PI(3,4,5)P3) bind and differentially regulate SLC9A1 activity. Its function is as follows. Electroneutral Na(+) /H(+) antiporter that extrudes Na(+) in exchange for external protons driven by the inward sodium ion chemical gradient, protecting cells from acidification that occurs from metabolism. Exchanges intracellular H(+) ions for extracellular Na(+) in 1:1 stoichiometry. Plays a key role in maintening intracellular pH neutral and cell volume, and thus is important for cell growth, proliferation, migration and survival. In addition, can transport lithium Li(+) and also functions as a Na(+)/Li(+) antiporter. SLC9A1 also functions in membrane anchoring and organization of scaffolding complexes that coordinate signaling inputs. This is Sodium/hydrogen exchanger 1 (SLC9A1) from Bos taurus (Bovine).